We begin with the raw amino-acid sequence, 418 residues long: Serine hydroxymethyltransferase (418 aa).

Residues Leu121 and 125–127 (GHL) each bind (6S)-5,6,7,8-tetrahydrofolate. Residue Lys230 is modified to N6-(pyridoxal phosphate)lysine. (6S)-5,6,7,8-tetrahydrofolate contacts are provided by residues Glu246 and 355–357 (SPF).

It belongs to the SHMT family. Homodimer. Pyridoxal 5'-phosphate serves as cofactor.

The protein resides in the cytoplasm. The enzyme catalyses (6R)-5,10-methylene-5,6,7,8-tetrahydrofolate + glycine + H2O = (6S)-5,6,7,8-tetrahydrofolate + L-serine. The protein operates within one-carbon metabolism; tetrahydrofolate interconversion. It participates in amino-acid biosynthesis; glycine biosynthesis; glycine from L-serine: step 1/1. In terms of biological role, catalyzes the reversible interconversion of serine and glycine with tetrahydrofolate (THF) serving as the one-carbon carrier. This reaction serves as the major source of one-carbon groups required for the biosynthesis of purines, thymidylate, methionine, and other important biomolecules. Also exhibits THF-independent aldolase activity toward beta-hydroxyamino acids, producing glycine and aldehydes, via a retro-aldol mechanism. This is Serine hydroxymethyltransferase from Streptococcus pneumoniae (strain Hungary19A-6).